Here is an 860-residue protein sequence, read N- to C-terminus: DNA mismatch repair protein MutS (860 aa).

Residue 625–632 (GPNMGGKS) coordinates ATP.

Belongs to the DNA mismatch repair MutS family.

Its function is as follows. This protein is involved in the repair of mismatches in DNA. It is possible that it carries out the mismatch recognition step. This protein has a weak ATPase activity. This is DNA mismatch repair protein MutS from Aeromonas hydrophila subsp. hydrophila (strain ATCC 7966 / DSM 30187 / BCRC 13018 / CCUG 14551 / JCM 1027 / KCTC 2358 / NCIMB 9240 / NCTC 8049).